Here is a 238-residue protein sequence, read N- to C-terminus: Ribonuclease PH (238 aa).

Phosphate-binding positions include arginine 86 and 124-126 (GTR).

This sequence belongs to the RNase PH family. Homohexameric ring arranged as a trimer of dimers.

It carries out the reaction tRNA(n+1) + phosphate = tRNA(n) + a ribonucleoside 5'-diphosphate. Its function is as follows. Phosphorolytic 3'-5' exoribonuclease that plays an important role in tRNA 3'-end maturation. Removes nucleotide residues following the 3'-CCA terminus of tRNAs; can also add nucleotides to the ends of RNA molecules by using nucleoside diphosphates as substrates, but this may not be physiologically important. Probably plays a role in initiation of 16S rRNA degradation (leading to ribosome degradation) during starvation. The protein is Ribonuclease PH of Erwinia tasmaniensis (strain DSM 17950 / CFBP 7177 / CIP 109463 / NCPPB 4357 / Et1/99).